The chain runs to 537 residues: 2-succinyl-5-enolpyruvyl-6-hydroxy-3-cyclohexene-1-carboxylate synthase (537 aa).

This sequence belongs to the TPP enzyme family. MenD subfamily. Homodimer. Mg(2+) is required as a cofactor. The cofactor is Mn(2+). Requires thiamine diphosphate as cofactor.

The enzyme catalyses isochorismate + 2-oxoglutarate + H(+) = 5-enolpyruvoyl-6-hydroxy-2-succinyl-cyclohex-3-ene-1-carboxylate + CO2. The protein operates within quinol/quinone metabolism; 1,4-dihydroxy-2-naphthoate biosynthesis; 1,4-dihydroxy-2-naphthoate from chorismate: step 2/7. Its pathway is quinol/quinone metabolism; menaquinone biosynthesis. Its function is as follows. Catalyzes the thiamine diphosphate-dependent decarboxylation of 2-oxoglutarate and the subsequent addition of the resulting succinic semialdehyde-thiamine pyrophosphate anion to isochorismate to yield 2-succinyl-5-enolpyruvyl-6-hydroxy-3-cyclohexene-1-carboxylate (SEPHCHC). In Nocardioides sp. (strain ATCC BAA-499 / JS614), this protein is 2-succinyl-5-enolpyruvyl-6-hydroxy-3-cyclohexene-1-carboxylate synthase.